We begin with the raw amino-acid sequence, 619 residues long: ATP-dependent zinc metalloprotease FtsH (619 aa).

At methionine 1–lysine 11 the chain is on the cytoplasmic side. A helical membrane pass occupies residues leucine 12 to alanine 32. The Periplasmic portion of the chain corresponds to methionine 33–serine 120. The helical transmembrane segment at serine 121–leucine 141 threads the bilayer. Over serine 142–serine 619 the chain is Cytoplasmic. Glycine 216–threonine 223 is a binding site for ATP. Histidine 437 provides a ligand contact to Zn(2+). Glutamate 438 is an active-site residue. Zn(2+)-binding residues include histidine 441 and aspartate 513.

It in the central section; belongs to the AAA ATPase family. The protein in the C-terminal section; belongs to the peptidase M41 family. As to quaternary structure, homohexamer. Requires Zn(2+) as cofactor.

Its subcellular location is the cell inner membrane. Acts as a processive, ATP-dependent zinc metallopeptidase for both cytoplasmic and membrane proteins. Plays a role in the quality control of integral membrane proteins. The polypeptide is ATP-dependent zinc metalloprotease FtsH (Hahella chejuensis (strain KCTC 2396)).